The sequence spans 201 residues: MAGRESDAVSLAGVVLAGGESRRMGRDKATLVLPGGSTTMVEHVLGIVGQRCEPVFVMAAQGQPLPPLQVPVLRDELRGLGPLPATGRGLRAAAEAGARFAFVCAVDMPGLTVDLIDDLVRSAIETDAEVVLPWDGRSHYLAAIYRTDLAERVDALVAAGERKTSALADSSDTQRIVMSDSAPLANVNTAADLPAPVRPGH.

GTP is bound by residues 16–18 (LAG), Lys28, Asp75, and Asp107. Mg(2+) is bound at residue Asp107.

This sequence belongs to the MobA family. The cofactor is Mg(2+).

It is found in the cytoplasm. The catalysed reaction is Mo-molybdopterin + GTP + H(+) = Mo-molybdopterin guanine dinucleotide + diphosphate. In terms of biological role, transfers a GMP moiety from GTP to Mo-molybdopterin (Mo-MPT) cofactor (Moco or molybdenum cofactor) to form Mo-molybdopterin guanine dinucleotide (Mo-MGD) cofactor. This Mycobacterium ulcerans (strain Agy99) protein is Probable molybdenum cofactor guanylyltransferase.